The primary structure comprises 288 residues: 2-hydroxy-6-oxononadienedioate/2-hydroxy-6-oxononatrienedioate hydrolase (288 aa).

An AB hydrolase-1 domain is found at 39-274 (LVLLHGSGPG…RCGHWAQWEH (236 aa)). His-268 acts as the Proton acceptor in catalysis.

It belongs to the AB hydrolase superfamily. MhpC family. Homodimer.

It catalyses the reaction (2Z,4E)-2-hydroxy-6-oxonona-2,4-dienedioate + H2O = (2Z)-2-hydroxypenta-2,4-dienoate + succinate + H(+). The enzyme catalyses (2Z,4E,7E)-2-hydroxy-6-oxonona-2,4,7-trienedioate + H2O = (2Z)-2-hydroxypenta-2,4-dienoate + fumarate + H(+). It functions in the pathway aromatic compound metabolism; 3-phenylpropanoate degradation. Functionally, catalyzes the cleavage of the C5-C6 bond of 2-hydroxy-6-oxononadienedioate and 2-hydroxy-6-oxononatrienedioate, a dienol ring fission product of the bacterial meta-cleavage pathway for degradation of phenylpropionic acid. The chain is 2-hydroxy-6-oxononadienedioate/2-hydroxy-6-oxononatrienedioate hydrolase from Paraburkholderia phymatum (strain DSM 17167 / CIP 108236 / LMG 21445 / STM815) (Burkholderia phymatum).